The sequence spans 354 residues: MLVLGIESSCDETGVALYDTERGLRAHCLHTQMAMHAEYGGVVPELASRDHIRRLVPLTEGCLAQAGASYGDIDAVAFTQGPGLGGALLAGSSYANALALALDKPVIPVHHLEGHLLSPLLAEEKPDFPFVALLVSGGHTQIMAVRGIGDYALLGESVDDAAGEAFDKTAKLLGLPYPGGAKLSELAESGRPEAFVFPRPMIHSDDLQMSFSGLKTAVLTAVEKVRAENGADDIPEQTRNDICRAFQDAVVDVLAAKVKKALLQTGFRTVVVAGGVGANRKLRETFGNMTVQIPTPKGKPKHPSEKVSVFFPPMAYCTDNGAMIAFAGAMHLGKGREVGAFNVRPRWPLSEIVR.

Fe cation contacts are provided by histidine 111 and histidine 115. Substrate is bound by residues 134 to 138, aspartate 167, glycine 180, and asparagine 279; that span reads LVSGG. Aspartate 319 serves as a coordination point for Fe cation.

Belongs to the KAE1 / TsaD family. Fe(2+) is required as a cofactor.

It localises to the cytoplasm. The catalysed reaction is L-threonylcarbamoyladenylate + adenosine(37) in tRNA = N(6)-L-threonylcarbamoyladenosine(37) in tRNA + AMP + H(+). Its function is as follows. Required for the formation of a threonylcarbamoyl group on adenosine at position 37 (t(6)A37) in tRNAs that read codons beginning with adenine. Is involved in the transfer of the threonylcarbamoyl moiety of threonylcarbamoyl-AMP (TC-AMP) to the N6 group of A37, together with TsaE and TsaB. TsaD likely plays a direct catalytic role in this reaction. The protein is tRNA N6-adenosine threonylcarbamoyltransferase of Neisseria meningitidis.